The following is a 369-amino-acid chain: Methylthioribose-1-phosphate isomerase (369 aa).

The residue at position 1 (M1) is an N-acetylmethionine. R158 carries the post-translational modification Omega-N-methylarginine. D248 functions as the Proton donor in the catalytic mechanism. S366 is modified (phosphoserine).

The protein belongs to the eIF-2B alpha/beta/delta subunits family. MtnA subfamily.

It is found in the cytoplasm. Its subcellular location is the nucleus. It carries out the reaction 5-(methylsulfanyl)-alpha-D-ribose 1-phosphate = 5-(methylsulfanyl)-D-ribulose 1-phosphate. It functions in the pathway amino-acid biosynthesis; L-methionine biosynthesis via salvage pathway; L-methionine from S-methyl-5-thio-alpha-D-ribose 1-phosphate: step 1/6. In terms of biological role, catalyzes the interconversion of methylthioribose-1-phosphate (MTR-1-P) into methylthioribulose-1-phosphate (MTRu-1-P). This chain is Methylthioribose-1-phosphate isomerase (Mri1), found in Rattus norvegicus (Rat).